We begin with the raw amino-acid sequence, 545 residues long: Chaperonin GroEL (545 aa).

Residues 29-32 (TLGP), K50, 86-90 (DGTTT), G413, and D495 each bind ATP.

The protein belongs to the chaperonin (HSP60) family. In terms of assembly, forms a cylinder of 14 subunits composed of two heptameric rings stacked back-to-back. Interacts with the co-chaperonin GroES.

The protein localises to the cytoplasm. It carries out the reaction ATP + H2O + a folded polypeptide = ADP + phosphate + an unfolded polypeptide.. Its function is as follows. Together with its co-chaperonin GroES, plays an essential role in assisting protein folding. The GroEL-GroES system forms a nano-cage that allows encapsulation of the non-native substrate proteins and provides a physical environment optimized to promote and accelerate protein folding. The sequence is that of Chaperonin GroEL from Borreliella burgdorferi (strain ATCC 35210 / DSM 4680 / CIP 102532 / B31) (Borrelia burgdorferi).